Here is a 615-residue protein sequence, read N- to C-terminus: Zinc finger protein 653 (615 aa).

4 disordered regions span residues 1 to 48, 95 to 117, 176 to 236, and 401 to 432; these read MAER…ARRR, RSGR…KRRR, PLSD…SSGL, and EEKE…ELDG. A Nuclear localization signal motif is present at residues 107 to 118; sequence PKKPKRKKRRRR. A compositionally biased stretch (basic residues) spans 108–117; sequence KKPKRKKRRR. Residues 193–205 show a composition bias toward low complexity; that stretch reads AGSSDSSSSGSAS. Residues 226-236 show a composition bias toward polar residues; that stretch reads TPTSPVGSSGL. Acidic residues predominate over residues 419–432; it reads AEPEAEADGEELDG. A Nuclear localization signal motif is present at residues 445 to 451; sequence EPEKRRR. C2H2-type zinc fingers lie at residues 467 to 492, 498 to 522, 528 to 550, 556 to 578, and 586 to 609; these read FHCP…NLVH, KVCP…MIIH, FTCE…RRTH, LQCE…MKKH, and FTCD…LKSH.

This sequence belongs to the krueppel C2H2-type zinc-finger protein family. Interacts with NR5A1. Highly expressed in testis, cerebellum, temporal lobe, hippocampus and the adrenal gland. Moderately expressed in spleen, uterus, thymus, pancreas, kidney, stomach and rectum.

Its subcellular location is the nucleus. Functionally, transcriptional repressor. May repress NR5A1, PPARG, NR1H3, NR4A2, ESR1 and NR3C1 transcriptional activity. This Homo sapiens (Human) protein is Zinc finger protein 653 (ZNF653).